Reading from the N-terminus, the 337-residue chain is Mitochondrial glutathione transporter SLC25A40 (337 aa).

3 Solcar repeats span residues 14–132 (VTPL…LSTF), 140–224 (NETR…LRRW), and 234–328 (STFM…GKGF). A run of 6 helical transmembrane segments spans residues 20 to 40 (MMASCAGAVVTSLMVTPLDVV), 104 to 124 (LWSGLPPTLVMAVPATVIYFT), 146 to 166 (IVAGIVARFGAVTMISPLELI), 200 to 221 (WAPTILRDVPFSAMYWYNYENL), 240 to 260 (FTAGALSGSFAAVATLPFDVV), and 299 to 319 (GLFTGLIPRLVKIVPACAIMI).

This sequence belongs to the mitochondrial carrier (TC 2.A.29) family. Widely expressed at low level.

It is found in the mitochondrion inner membrane. The enzyme catalyses glutathione(in) = glutathione(out). Its function is as follows. Probable mitochondrial transporter required for glutathione import into mitochondria. Glutathione, which plays key roles in oxidative metabolism, is produced exclusively in the cytosol and is imported in many organelles. Mitochondrial glutathione is required for the activity and stability of proteins containing iron-sulfur clusters, as well as erythropoiesis. The sequence is that of Mitochondrial glutathione transporter SLC25A40 from Rattus norvegicus (Rat).